A 1264-amino-acid chain; its full sequence is P-type sodium-transporting ATPase4 (1264 aa).

The segment covering 1–12 (MSSQNNNKQGGQ) has biased composition (polar residues). The interval 1 to 102 (MSSQNNNKQG…INGEKNDDNN (102 aa)) is disordered. Composition is skewed to basic and acidic residues over residues 15 to 42 (NNKK…DELN) and 50 to 64 (NDMK…KKNE). The next 8 membrane-spanning stretches (helical) occupy residues 165-185 (VWLI…LVAA), 186-206 (VASL…IVTL), 359-379 (GLIG…AVII), 393-413 (FVII…GLPM), 923-943 (FVCF…VAIV), 1006-1026 (IFEA…CTGF), 1203-1223 (CSIS…TSIL), and 1226-1246 (TCLL…NLFL).

It belongs to the cation transport ATPase (P-type) (TC 3.A.3) family.

Its subcellular location is the cell membrane. The enzyme catalyses Na(+)(in) + ATP + H2O = Na(+)(out) + ADP + phosphate + H(+). With respect to regulation, inhibited by cipargamin and other spiroindolone compounds. Inhibited by 4-cyano-3-methylisoquinoline derivatives MB14 and MB10 but not RK18. Inhibited by (+)-SJ733, a dihydroisoquinolone compound. In terms of biological role, sodium-exporting ATPase. Required for the extrusion of Na(+) from the intraerythrocytic parasites to maintain a low cytosolic concentration of Na(+). The polypeptide is P-type sodium-transporting ATPase4 (Plasmodium falciparum (isolate 3D7)).